The primary structure comprises 343 residues: L-threonine 3-dehydrogenase (343 aa).

Residue Cys-38 participates in Zn(2+) binding. Active-site charge relay system residues include Thr-40 and His-43. 6 residues coordinate Zn(2+): His-63, Glu-64, Cys-93, Cys-96, Cys-99, and Cys-107. NAD(+) is bound by residues Ile-176, Asp-196, Arg-201, Leu-261 to Ile-263, and Ile-286 to Gly-288.

It belongs to the zinc-containing alcohol dehydrogenase family. As to quaternary structure, homotetramer. Requires Zn(2+) as cofactor.

The protein localises to the cytoplasm. It carries out the reaction L-threonine + NAD(+) = (2S)-2-amino-3-oxobutanoate + NADH + H(+). It participates in amino-acid degradation; L-threonine degradation via oxydo-reductase pathway; glycine from L-threonine: step 1/2. Catalyzes the NAD(+)-dependent oxidation of L-threonine to 2-amino-3-ketobutyrate. The protein is L-threonine 3-dehydrogenase of Thermus thermophilus (strain ATCC 27634 / DSM 579 / HB8).